Here is an 89-residue protein sequence, read N- to C-terminus: Putative protein T-ENOL (89 aa).

2 disordered regions span residues 1–31 (MASTSARSGDKKDTWPIQAAASLGGGQKASL) and 54–89 (RSHMNPMPDKEKQTKDQGTQISRHVFFTKTRGTDTR).

Specifically expressed in testis (at protein level).

The chain is Putative protein T-ENOL from Rattus norvegicus (Rat).